The sequence spans 496 residues: NADH-ubiquinone oxidoreductase 51 kDa subunit, mitochondrial (496 aa).

A mitochondrion-targeting transit peptide spans 1-30; sequence MISRAAAPSSSIASLSSRSLRAQAPAARSF. Residue 98–107 coordinates NAD(+); sequence GRGGAGFPSG. 214–261 lines the FMN pocket; sequence GMGAYVCGEETSLIESIEGKAGKPRLKPPFPAAVGLFGCPSTVTNVET. C393, C396, C399, and C439 together coordinate [4Fe-4S] cluster.

This sequence belongs to the complex I 51 kDa subunit family. As to quaternary structure, complex I is composed of about 40 different subunits. This is a component of the flavoprotein-sulfur (FP) fragment of the enzyme. FMN is required as a cofactor. It depends on [4Fe-4S] cluster as a cofactor.

It is found in the mitochondrion inner membrane. It catalyses the reaction a ubiquinone + NADH + 5 H(+)(in) = a ubiquinol + NAD(+) + 4 H(+)(out). Functionally, core subunit of the mitochondrial membrane respiratory chain NADH dehydrogenase (Complex I) that is believed to belong to the minimal assembly required for catalysis. Complex I functions in the transfer of electrons from NADH to the respiratory chain. The immediate electron acceptor for the enzyme is believed to be ubiquinone. This is NADH-ubiquinone oxidoreductase 51 kDa subunit, mitochondrial (NUO51) from Aspergillus niger.